The sequence spans 301 residues: Ornithine carbamoyltransferase (301 aa).

Residues 53 to 56 (STRT), Gln-80, Arg-104, and 131 to 134 (HPCQ) each bind carbamoyl phosphate. L-ornithine contacts are provided by residues Asn-162, Asp-221, and 225 to 226 (SI). Carbamoyl phosphate-binding positions include 260-261 (CL) and Arg-288.

This sequence belongs to the aspartate/ornithine carbamoyltransferase superfamily. OTCase family.

The protein localises to the cytoplasm. It carries out the reaction carbamoyl phosphate + L-ornithine = L-citrulline + phosphate + H(+). It functions in the pathway amino-acid biosynthesis; L-arginine biosynthesis; L-arginine from L-ornithine and carbamoyl phosphate: step 1/3. Its function is as follows. Reversibly catalyzes the transfer of the carbamoyl group from carbamoyl phosphate (CP) to the N(epsilon) atom of ornithine (ORN) to produce L-citrulline. This is Ornithine carbamoyltransferase from Cenarchaeum symbiosum (strain A).